Consider the following 280-residue polypeptide: 2,3,4,5-tetrahydropyridine-2,6-dicarboxylate N-succinyltransferase (280 aa).

Substrate contacts are provided by Arg-107 and Asp-144.

The protein belongs to the transferase hexapeptide repeat family. In terms of assembly, homotrimer.

Its subcellular location is the cytoplasm. It carries out the reaction (S)-2,3,4,5-tetrahydrodipicolinate + succinyl-CoA + H2O = (S)-2-succinylamino-6-oxoheptanedioate + CoA. It functions in the pathway amino-acid biosynthesis; L-lysine biosynthesis via DAP pathway; LL-2,6-diaminopimelate from (S)-tetrahydrodipicolinate (succinylase route): step 1/3. The protein is 2,3,4,5-tetrahydropyridine-2,6-dicarboxylate N-succinyltransferase of Paramagnetospirillum magneticum (strain ATCC 700264 / AMB-1) (Magnetospirillum magneticum).